The sequence spans 419 residues: 3-isopropylmalate dehydratase large subunit (419 aa).

Residues cysteine 300, cysteine 360, and cysteine 363 each contribute to the [4Fe-4S] cluster site.

Belongs to the aconitase/IPM isomerase family. LeuC type 2 subfamily. As to quaternary structure, heterodimer of LeuC and LeuD. [4Fe-4S] cluster serves as cofactor.

The catalysed reaction is (2R,3S)-3-isopropylmalate = (2S)-2-isopropylmalate. It participates in amino-acid biosynthesis; L-leucine biosynthesis; L-leucine from 3-methyl-2-oxobutanoate: step 2/4. In terms of biological role, catalyzes the isomerization between 2-isopropylmalate and 3-isopropylmalate, via the formation of 2-isopropylmaleate. The polypeptide is 3-isopropylmalate dehydratase large subunit (Clostridium botulinum (strain Alaska E43 / Type E3)).